Consider the following 172-residue polypeptide: Trypsin inhibitor 1B (172 aa).

2 cysteine pairs are disulfide-bonded: C40–C84 and C133–C139.

The protein belongs to the protease inhibitor I3 (leguminous Kunitz-type inhibitor) family.

Its function is as follows. WTI-1B inhibits trypsin stoichiometrically. This is Trypsin inhibitor 1B from Psophocarpus tetragonolobus (Winged bean).